Reading from the N-terminus, the 356-residue chain is DNA polymerase IV (356 aa).

A UmuC domain is found at 1-188; the sequence is MDTSRKIIHI…IPVTKFYGVG (188 aa). Mg(2+)-binding residues include D11 and D106. E107 is a catalytic residue.

The protein belongs to the DNA polymerase type-Y family. In terms of assembly, monomer. Mg(2+) is required as a cofactor.

It localises to the cytoplasm. It catalyses the reaction DNA(n) + a 2'-deoxyribonucleoside 5'-triphosphate = DNA(n+1) + diphosphate. Poorly processive, error-prone DNA polymerase involved in untargeted mutagenesis. Copies undamaged DNA at stalled replication forks, which arise in vivo from mismatched or misaligned primer ends. These misaligned primers can be extended by PolIV. Exhibits no 3'-5' exonuclease (proofreading) activity. May be involved in translesional synthesis, in conjunction with the beta clamp from PolIII. This Listeria monocytogenes serotype 4b (strain F2365) protein is DNA polymerase IV.